Reading from the N-terminus, the 359-residue chain is PWWP domain-containing protein 1 (359 aa).

The disordered stretch occupies residues 1–37; sequence MNNARTNAKRRRLSSKQGGLSISEGKESNIPSVVEES. Positions 52 to 114 constitute a PWWP domain; the sequence is FGDRILVKAP…RNSVKPLLDS (63 aa). 2 disordered regions span residues 133–161 and 204–255; these read AYEASKTPPDLKEESSTDEEMDSLSAAEE and VAST…SPLN. Polar residues predominate over residues 204-224; sequence VASTSRSSTQLSDQRYPLSSN. The residue at position 252 (Ser252) is a Phosphoserine.

Interacts with set9 and histone H4K20me1. Associates with nucleosomes.

Its subcellular location is the nucleus. Necessary for DNA damage checkpoint activation. Required for the association of set9 with chromatin and subsequent methylation of H4K20. Associates with H4K20me1 to increase the concentration of set9 on chromatin to perform H4K20me3. H4K20me3 is mainly enriched at heterochromatin and is required for proper heterochromatin assembly. In Schizosaccharomyces pombe (strain 972 / ATCC 24843) (Fission yeast), this protein is PWWP domain-containing protein 1 (pdp1).